A 111-amino-acid polypeptide reads, in one-letter code: Translation initiation factor 1A (111 aa).

In terms of domain architecture, S1-like spans 11–83; it reads KKIRLPKEGE…ERADVTWRYT (73 aa).

This sequence belongs to the eIF-1A family.

Seems to be required for maximal rate of protein biosynthesis. Enhances ribosome dissociation into subunits and stabilizes the binding of the initiator Met-tRNA(I) to 40 S ribosomal subunits. In Methanopyrus kandleri (strain AV19 / DSM 6324 / JCM 9639 / NBRC 100938), this protein is Translation initiation factor 1A (eIF1A).